The sequence spans 257 residues: 3-methyl-2-oxobutanoate hydroxymethyltransferase (257 aa).

Residues Asp-42 and Asp-86 each coordinate Mg(2+). 3-methyl-2-oxobutanoate is bound by residues 42–43, Asp-86, and Lys-116; that span reads DS. Glu-118 is a binding site for Mg(2+). Glu-185 serves as the catalytic Proton acceptor.

It belongs to the PanB family. Homodecamer; pentamer of dimers. Requires Mg(2+) as cofactor.

The protein resides in the cytoplasm. It carries out the reaction 3-methyl-2-oxobutanoate + (6R)-5,10-methylene-5,6,7,8-tetrahydrofolate + H2O = 2-dehydropantoate + (6S)-5,6,7,8-tetrahydrofolate. It participates in cofactor biosynthesis; (R)-pantothenate biosynthesis; (R)-pantoate from 3-methyl-2-oxobutanoate: step 1/2. In terms of biological role, catalyzes the reversible reaction in which hydroxymethyl group from 5,10-methylenetetrahydrofolate is transferred onto alpha-ketoisovalerate to form ketopantoate. This Prochlorococcus marinus subsp. pastoris (strain CCMP1986 / NIES-2087 / MED4) protein is 3-methyl-2-oxobutanoate hydroxymethyltransferase.